Here is an 860-residue protein sequence, read N- to C-terminus: Leucine--tRNA ligase (860 aa).

The 'HIGH' region motif lies at 42–52 (PYPSGRLHMGH). The short motif at 619–623 (KMSKS) is the 'KMSKS' region element. K622 provides a ligand contact to ATP.

It belongs to the class-I aminoacyl-tRNA synthetase family.

The protein resides in the cytoplasm. The enzyme catalyses tRNA(Leu) + L-leucine + ATP = L-leucyl-tRNA(Leu) + AMP + diphosphate. The sequence is that of Leucine--tRNA ligase from Pectobacterium carotovorum subsp. carotovorum (strain PC1).